The chain runs to 357 residues: Holliday junction branch migration complex subunit RuvB (357 aa).

Residues 1 to 27 (MGRFSNADGPGDDADEREVTPALTVGE) form a disordered region. The tract at residues 1–195 (MGRFSNADGP…FGFTAHMDFY (195 aa)) is large ATPase domain (RuvB-L). Residues L34, R35, G76, K79, T80, S81, 142–144 (EDF), R185, Y195, and R232 each bind ATP. Mg(2+) is bound at residue T80. Residues 196-266 (EPAELERVLA…IAKYALEVYD (71 aa)) are small ATPAse domain (RuvB-S). Positions 269-357 (ELGLDRLDRA…GGLGQVGLFE (89 aa)) are head domain (RuvB-H). 2 residues coordinate DNA: R324 and R329.

Belongs to the RuvB family. Homohexamer. Forms an RuvA(8)-RuvB(12)-Holliday junction (HJ) complex. HJ DNA is sandwiched between 2 RuvA tetramers; dsDNA enters through RuvA and exits via RuvB. An RuvB hexamer assembles on each DNA strand where it exits the tetramer. Each RuvB hexamer is contacted by two RuvA subunits (via domain III) on 2 adjacent RuvB subunits; this complex drives branch migration. In the full resolvosome a probable DNA-RuvA(4)-RuvB(12)-RuvC(2) complex forms which resolves the HJ.

It localises to the cytoplasm. It carries out the reaction ATP + H2O = ADP + phosphate + H(+). The RuvA-RuvB-RuvC complex processes Holliday junction (HJ) DNA during genetic recombination and DNA repair, while the RuvA-RuvB complex plays an important role in the rescue of blocked DNA replication forks via replication fork reversal (RFR). RuvA specifically binds to HJ cruciform DNA, conferring on it an open structure. The RuvB hexamer acts as an ATP-dependent pump, pulling dsDNA into and through the RuvAB complex. RuvB forms 2 homohexamers on either side of HJ DNA bound by 1 or 2 RuvA tetramers; 4 subunits per hexamer contact DNA at a time. Coordinated motions by a converter formed by DNA-disengaged RuvB subunits stimulates ATP hydrolysis and nucleotide exchange. Immobilization of the converter enables RuvB to convert the ATP-contained energy into a lever motion, pulling 2 nucleotides of DNA out of the RuvA tetramer per ATP hydrolyzed, thus driving DNA branch migration. The RuvB motors rotate together with the DNA substrate, which together with the progressing nucleotide cycle form the mechanistic basis for DNA recombination by continuous HJ branch migration. Branch migration allows RuvC to scan DNA until it finds its consensus sequence, where it cleaves and resolves cruciform DNA. This is Holliday junction branch migration complex subunit RuvB from Mycolicibacterium gilvum (strain PYR-GCK) (Mycobacterium gilvum (strain PYR-GCK)).